The chain runs to 126 residues: Glycine cleavage system H protein (126 aa).

One can recognise a Lipoyl-binding domain in the interval 22–104; the sequence is IAYVGITDYA…YGEGWLIKMK (83 aa). Lysine 63 bears the N6-lipoyllysine mark.

This sequence belongs to the GcvH family. As to quaternary structure, the glycine cleavage system is composed of four proteins: P, T, L and H. (R)-lipoate is required as a cofactor.

Its function is as follows. The glycine cleavage system catalyzes the degradation of glycine. The H protein shuttles the methylamine group of glycine from the P protein to the T protein. In Bacteroides thetaiotaomicron (strain ATCC 29148 / DSM 2079 / JCM 5827 / CCUG 10774 / NCTC 10582 / VPI-5482 / E50), this protein is Glycine cleavage system H protein.